Reading from the N-terminus, the 365-residue chain is Probable caffeine synthase 2 (365 aa).

Tyr19 lines the S-adenosyl-L-homocysteine pocket. Residue Thr26 participates in caffeine binding. 5 residues coordinate S-adenosyl-L-homocysteine: Cys62, Asp99, Leu100, Ser134, and Phe135. 3 residues coordinate caffeine: Tyr152, His155, and Trp156. Residue Asn173 participates in Mg(2+) binding. Arg221 is a binding site for caffeine. Positions 259, 261, and 262 each coordinate Mg(2+). Phe317 contacts caffeine.

Belongs to the methyltransferase superfamily. Type-7 methyltransferase family. Mg(2+) is required as a cofactor.

It carries out the reaction 7-methylxanthine + S-adenosyl-L-methionine = theobromine + S-adenosyl-L-homocysteine + H(+). The catalysed reaction is theobromine + S-adenosyl-L-methionine = caffeine + S-adenosyl-L-homocysteine + H(+). It catalyses the reaction 1,7-dimethylxanthine + S-adenosyl-L-methionine = caffeine + S-adenosyl-L-homocysteine + H(+). It functions in the pathway alkaloid biosynthesis. Its function is as follows. May be involved in the biosynthesis of caffeine. Catalyzes the conversion of 7-methylxanthine (7mX) to theobromine and of theobromine to caffeine. Has 1-N-methylation activity. The chain is Probable caffeine synthase 2 from Camellia sinensis (Tea plant).